The primary structure comprises 185 residues: Lysine-rich arabinogalactan protein 17 (185 aa).

Positions 1–21 (MTRNILLTVTLICIVFITVGG) are cleaved as a signal peptide. Residues 25–160 (ATAPIHSPST…FSPAADDQSG (136 aa)) form a disordered region. The span at 43 to 68 (SPAISPAAPTPESTEAPAKTPVEAPV) shows a compositional bias: low complexity. Pro residues predominate over residues 69-88 (EAPPSPTPASTPQISPPAPS). Residues 111–122 (TKHKKKTKKHKT) are compositionally biased toward basic residues. A compositionally biased stretch (pro residues) spans 135-146 (PPAPPGEAPGPG). The GPI-anchor amidated serine moiety is linked to residue serine 159. Residues 160 to 185 (GAQRISVVIQMVGAAAIAWSLLVLAF) constitute a propeptide, removed in mature form.

This sequence belongs to the lysine-rich AGP family. Post-translationally, O-glycosylated on the hydroxyproline residues. In terms of tissue distribution, predominantly expressed in open flowers. Also expressed in leaves and stems, and at a lower level in roots.

Its subcellular location is the cell membrane. Proteoglycan that seems to be implicated in diverse developmental roles such as differentiation, cell-cell recognition, embryogenesis and programmed cell death. This is Lysine-rich arabinogalactan protein 17 (AGP17) from Arabidopsis thaliana (Mouse-ear cress).